We begin with the raw amino-acid sequence, 85 residues long: Putative regulatory protein DICTH_1339 (85 aa).

It belongs to the RemA family.

The polypeptide is Putative regulatory protein DICTH_1339 (Dictyoglomus thermophilum (strain ATCC 35947 / DSM 3960 / H-6-12)).